The following is a 235-amino-acid chain: NADH-quinone oxidoreductase subunit C (235 aa).

Belongs to the complex I 30 kDa subunit family. NDH-1 is composed of 14 different subunits. Subunits NuoB, C, D, E, F, and G constitute the peripheral sector of the complex.

It is found in the cell membrane. It catalyses the reaction a quinone + NADH + 5 H(+)(in) = a quinol + NAD(+) + 4 H(+)(out). NDH-1 shuttles electrons from NADH, via FMN and iron-sulfur (Fe-S) centers, to quinones in the respiratory chain. The immediate electron acceptor for the enzyme in this species is believed to be a menaquinone. Couples the redox reaction to proton translocation (for every two electrons transferred, four hydrogen ions are translocated across the cytoplasmic membrane), and thus conserves the redox energy in a proton gradient. This chain is NADH-quinone oxidoreductase subunit C, found in Mycolicibacterium paratuberculosis (strain ATCC BAA-968 / K-10) (Mycobacterium paratuberculosis).